The primary structure comprises 474 residues: Adenylyl cyclase-associated protein 1 (474 aa).

A2 carries the post-translational modification N-acetylalanine. Phosphotyrosine is present on Y31. Residue S34 is modified to Phosphoserine. Residue K80 is modified to N6-acetyllysine. 2 disordered regions span residues 215–253 (ELSG…SASR) and 277–316 (MKTH…ATKK). Residues 217–227 (SGLPSGPSVGS) show a composition bias toward low complexity. Positions 228–241 (GPPPPPPGPPPPPI) are enriched in pro residues. An N6-methyllysine modification is found at K286. A phosphoserine mark is found at S289, S294, and S300. Positions 299-311 (FSAPKPQTSPSPK) are enriched in pro residues. Position 306 is a phosphothreonine (T306). Residues S307 and S309 each carry the phosphoserine modification. The region spanning 312–452 (PATKKEPALL…EGGDFNEFPV (141 aa)) is the C-CAP/cofactor C-like domain. A Glycyl lysine isopeptide (Lys-Gly) (interchain with G-Cter in SUMO1) cross-link involves residue K347.

The protein belongs to the CAP family. Homodimer. Binds actin monomers. Ubiquitous.

It is found in the cell membrane. Its function is as follows. Directly regulates filament dynamics and has been implicated in a number of complex developmental and morphological processes, including mRNA localization and the establishment of cell polarity. The chain is Adenylyl cyclase-associated protein 1 (Cap1) from Mus musculus (Mouse).